A 107-amino-acid polypeptide reads, in one-letter code: Rhodocoxin (107 aa).

In terms of domain architecture, 2Fe-2S ferredoxin-type spans Pro2 to Gln106. Residues Cys40, Cys46, Cys49, and Cys87 each contribute to the [2Fe-2S] cluster site.

Belongs to the adrenodoxin/putidaredoxin family. Requires [2Fe-2S] cluster as cofactor.

In terms of biological role, ferredoxin-type protein which transfers electrons from rhodocoxin reductase to cytochrome CYP116 (ThcB), which is involved in the degradation of thiocarbamate herbicides. The protein is Rhodocoxin (thcC) of Rhodococcus erythropolis (Arthrobacter picolinophilus).